We begin with the raw amino-acid sequence, 382 residues long: Succinate--CoA ligase [ADP-forming] subunit beta (382 aa).

Residues 9–237 (KQVFADAGIP…AAEGDELEQK (229 aa)) enclose the ATP-grasp domain. ATP-binding positions include Lys-45, 52-54 (GRG), Glu-91, Val-94, and Glu-99. Mg(2+) contacts are provided by Asn-191 and Asp-205. Substrate is bound by residues Asn-257 and 314 to 316 (GIT).

It belongs to the succinate/malate CoA ligase beta subunit family. As to quaternary structure, heterotetramer of two alpha and two beta subunits. Requires Mg(2+) as cofactor.

The catalysed reaction is succinate + ATP + CoA = succinyl-CoA + ADP + phosphate. It catalyses the reaction GTP + succinate + CoA = succinyl-CoA + GDP + phosphate. It functions in the pathway carbohydrate metabolism; tricarboxylic acid cycle; succinate from succinyl-CoA (ligase route): step 1/1. Functionally, succinyl-CoA synthetase functions in the citric acid cycle (TCA), coupling the hydrolysis of succinyl-CoA to the synthesis of either ATP or GTP and thus represents the only step of substrate-level phosphorylation in the TCA. The beta subunit provides nucleotide specificity of the enzyme and binds the substrate succinate, while the binding sites for coenzyme A and phosphate are found in the alpha subunit. The sequence is that of Succinate--CoA ligase [ADP-forming] subunit beta from Haloarcula marismortui (strain ATCC 43049 / DSM 3752 / JCM 8966 / VKM B-1809) (Halobacterium marismortui).